Consider the following 164-residue polypeptide: UPF0114 protein YqhA (164 aa).

The next 3 membrane-spanning stretches (helical) occupy residues 15-35 (LLAPVYFGLSLALVALALKFF), 53-73 (LILVLLSLVDMTLVGGLLVMV), and 136-156 (LMWYVIIHLTFVLSAFVMGYL).

The protein belongs to the UPF0114 family.

The protein resides in the cell membrane. The sequence is that of UPF0114 protein YqhA from Escherichia coli O139:H28 (strain E24377A / ETEC).